The following is a 411-amino-acid chain: Lissencephaly-1 homolog (411 aa).

One can recognise a LisH domain in the interval 7–39 (QREELNKAIADYLASNGFMEALESFKKETDMPG). Residues 54-80 (TSVIRLQKKVMDLEGRLAEAEKEYISG) are a coiled coil. Residues 77–89 (YISGTPSREKRSP) show a composition bias toward basic and acidic residues. The disordered stretch occupies residues 77–96 (YISGTPSREKRSPTEWIPRP). 7 WD repeats span residues 104-145 (GHRA…RTIK), 146-187 (GHTD…RTMH), 188-227 (GHDH…CVRT), 230-269 (GHRD…CKLE), 272-334 (EHDH…ALFT), 337-376 (GHDN…CCKT), and 379-411 (AHSH…WECR).

This sequence belongs to the WD repeat LIS1/nudF family.

The protein localises to the cytoplasm. It localises to the cytoskeleton. Its subcellular location is the microtubule organizing center. The protein resides in the centrosome. In terms of biological role, positively regulates the activity of the minus-end directed microtubule motor protein dynein. May enhance dynein-mediated microtubule sliding by targeting dynein to the microtubule plus end. Required for several dynein- and microtubule-dependent processes. This is Lissencephaly-1 homolog from Ixodes scapularis (Black-legged tick).